The sequence spans 147 residues: Large ribosomal subunit protein uL15 (147 aa).

Basic and acidic residues predominate over residues methionine 1–arginine 20. The interval methionine 1 to glutamine 61 is disordered. The segment covering arginine 23–alanine 33 has biased composition (gly residues). Positions glycine 34–glycine 47 are enriched in basic residues.

It belongs to the universal ribosomal protein uL15 family. Part of the 50S ribosomal subunit.

Functionally, binds to the 23S rRNA. The protein is Large ribosomal subunit protein uL15 of Xanthomonas euvesicatoria pv. vesicatoria (strain 85-10) (Xanthomonas campestris pv. vesicatoria).